A 150-amino-acid polypeptide reads, in one-letter code: SsrA-binding protein (150 aa).

The interval 130–150 (DKRESLKEKDDRREMDRMFKR) is disordered.

Belongs to the SmpB family.

The protein localises to the cytoplasm. In terms of biological role, required for rescue of stalled ribosomes mediated by trans-translation. Binds to transfer-messenger RNA (tmRNA), required for stable association of tmRNA with ribosomes. tmRNA and SmpB together mimic tRNA shape, replacing the anticodon stem-loop with SmpB. tmRNA is encoded by the ssrA gene; the 2 termini fold to resemble tRNA(Ala) and it encodes a 'tag peptide', a short internal open reading frame. During trans-translation Ala-aminoacylated tmRNA acts like a tRNA, entering the A-site of stalled ribosomes, displacing the stalled mRNA. The ribosome then switches to translate the ORF on the tmRNA; the nascent peptide is terminated with the 'tag peptide' encoded by the tmRNA and targeted for degradation. The ribosome is freed to recommence translation, which seems to be the essential function of trans-translation. This chain is SsrA-binding protein, found in Phocaeicola vulgatus (strain ATCC 8482 / DSM 1447 / JCM 5826 / CCUG 4940 / NBRC 14291 / NCTC 11154) (Bacteroides vulgatus).